Reading from the N-terminus, the 310-residue chain is 4-hydroxyproline epimerase (310 aa).

Catalysis depends on Cys88, which acts as the Proton acceptor. Residues 89–90, His208, and Asp232 contribute to the substrate site; that span reads GH. Cys236 serves as the catalytic Proton donor. 237–238 serves as a coordination point for substrate; that stretch reads GT.

The protein belongs to the proline racemase family. As to quaternary structure, homodimer.

The enzyme catalyses trans-4-hydroxy-L-proline = cis-4-hydroxy-D-proline. In terms of biological role, allows intracellular utilization of 4-hydroxyproline, one of the major constituents of host collagen, by converting 4-hydroxy-L-proline to 4-hydroxy-D-proline, which can be further metabolized by intracellular 4-hydroxy-D-proline oxidases. The chain is 4-hydroxyproline epimerase from Burkholderia cenocepacia (strain HI2424).